The primary structure comprises 137 residues: Large ribosomal subunit protein uL16 (137 aa).

This sequence belongs to the universal ribosomal protein uL16 family. Part of the 50S ribosomal subunit.

In terms of biological role, binds 23S rRNA and is also seen to make contacts with the A and possibly P site tRNAs. The sequence is that of Large ribosomal subunit protein uL16 from Stenotrophomonas maltophilia (strain R551-3).